The sequence spans 749 residues: Cytosolic phospholipase A2 (749 aa).

The segment at 1 to 178 (MSFIDPYQHI…MKKLLGPKNS (178 aa)) is phospholipid binding. The residue at position 2 (Ser-2) is a Phosphoserine. Residues 6-122 (PYQHIIVEHQ…KVGEKKEVPF (117 aa)) form the C2 domain. Residues Asp-40, Thr-41, Asp-43, Asn-65, Asp-93, Ala-94, and Asn-95 each contribute to the Ca(2+) site. The PLA2c domain occupies 140–740 (SCPDLRFSMA…SNVEARRFFN (601 aa)). Ser-228 (nucleophile) is an active-site residue. Thr-268 carries the phosphothreonine modification. Positions 409–457 (GSQSRGSTMEEELENITTKHIVSNDSSDSDDESHEPKGTENEDAGSDYQ) are disordered. Ser-434, Ser-435, and Ser-437 each carry phosphoserine. Ser-505 bears the Phosphoserine; by MAPK mark. Ser-515 bears the Phosphoserine mark. A Glycyl lysine isopeptide (Lys-Gly) (interchain with G-Cter in SUMO2) cross-link involves residue Lys-541. The active-site Proton acceptor is Asp-549. Lys-606 is covalently cross-linked (Glycyl lysine isopeptide (Lys-Gly) (interchain with G-Cter in SUMO2)). Phosphoserine occurs at positions 727 and 729.

In terms of assembly, interacts with KAT5. In terms of processing, phosphorylated at both Ser-505 and Ser-727 in response to mitogenic stimuli. Expressed in various cells and tissues such as macrophages, neutrophils, fibroblasts and lung endothelium. Expressed in platelets (at protein level).

The protein localises to the cytoplasm. The protein resides in the golgi apparatus membrane. It localises to the nucleus envelope. It catalyses the reaction a 1,2-diacyl-sn-glycero-3-phosphocholine + H2O = a 1-acyl-sn-glycero-3-phosphocholine + a fatty acid + H(+). The enzyme catalyses a 1-O-alkyl-2-acyl-sn-glycero-3-phosphocholine + H2O = a 1-O-alkyl-sn-glycero-3-phosphocholine + a fatty acid + H(+). It carries out the reaction a 1-acyl-sn-glycero-3-phosphocholine + H2O = sn-glycerol 3-phosphocholine + a fatty acid + H(+). The catalysed reaction is 1-hexadecanoyl-2-(5Z,8Z,11Z,14Z-eicosatetraenoyl)-sn-glycero-3-phosphocholine + H2O = 1-hexadecanoyl-sn-glycero-3-phosphocholine + (5Z,8Z,11Z,14Z)-eicosatetraenoate + H(+). It catalyses the reaction 1,2-di-(5Z,8Z,11Z,14Z-eicosatetraenoyl)-sn-glycero-3-phosphocholine + H2O = 1-(5Z,8Z,11Z,14Z-eicosatetraenoyl)-sn-glycero-3-phosphocholine + (5Z,8Z,11Z,14Z)-eicosatetraenoate + H(+). The enzyme catalyses 1-octadecanoyl-2-(5Z,8Z,11Z,14Z-eicosatetraenoyl)-sn-glycero-3-phosphocholine + H2O = 1-octadecanoyl-sn-glycero-3-phosphocholine + (5Z,8Z,11Z,14Z)-eicosatetraenoate + H(+). It carries out the reaction 1-hexadecanoyl-2-(9Z,12Z-octadecadienoyl)-sn-glycero-3-phosphocholine + H2O = (9Z,12Z)-octadecadienoate + 1-hexadecanoyl-sn-glycero-3-phosphocholine + H(+). The catalysed reaction is 1-octadecanoyl-2-(9Z,12Z,15Z-octadecatrienoyl)-sn-glycero-3-phosphocholine + H2O = (9Z,12Z,15Z)-octadecatrienoate + 1-octadecanoyl-sn-glycero-3-phosphocholine + H(+). It catalyses the reaction 1-(5Z,8Z,11Z,14Z-eicosatetraenoyl)-2-hexadecanoyl-sn-glycero-3-phosphocholine + H2O = 1-(5Z,8Z,11Z,14Z-eicosatetraenoyl)-sn-glycero-3-phosphocholine + hexadecanoate + H(+). The enzyme catalyses 1-O-hexadecyl-2-(5Z,8Z,11Z,14Z)-eicosatetraenoyl-sn-glycero-3-phosphocholine + H2O = 1-O-hexadecyl-sn-glycero-3-phosphocholine + (5Z,8Z,11Z,14Z)-eicosatetraenoate + H(+). It carries out the reaction 1,2-di-(9Z-octadecenoyl)-sn-glycero-3-phospho-(1'-sn-glycerol) + H2O = 1-(9Z-octadecenoyl)-sn-glycero-3-phospho-(1'-sn-glycerol) + (9Z)-octadecenoate + H(+). The catalysed reaction is 1-octadecanoyl-2-(5Z,8Z,11Z,14Z-eicosatetraenoyl)-sn-glycero-3-phosphate + H2O = 1-octadecanoyl-sn-glycero-3-phosphate + (5Z,8Z,11Z,14Z)-eicosatetraenoate + H(+). It catalyses the reaction 1-hexadecanoyl-sn-glycero-3-phosphocholine + H2O = sn-glycerol 3-phosphocholine + hexadecanoate + H(+). The enzyme catalyses 2-(prostaglandin E2)-sn-glycero-3-phosphoethanolamine + H2O = sn-glycero-3-phosphoethanolamine + prostaglandin E2 + H(+). It carries out the reaction 2-[(15S)-hydroxy-(5Z,8Z,11Z,13E)-eicosatetraenoyl]-sn-glycero-3-phosphocholine + H2O = (15S)-hydroxy-(5Z,8Z,11Z,13E)-eicosatetraenoate + sn-glycerol 3-phosphocholine + H(+). The catalysed reaction is 2-[(15R)-hydroxy-(5Z,8Z,11Z,13E)-eicosatetraenoyl]-sn-glycero-3-phosphocholine + H2O = (15R)-hydroxy-(5Z,8Z,11Z,13E)-eicosatetraenoate + sn-glycerol 3-phosphocholine + H(+). It catalyses the reaction 2-(prostaglandin E2)-sn-glycero-3-phosphocholine + H2O = prostaglandin E2 + sn-glycerol 3-phosphocholine + H(+). The enzyme catalyses 2-[(11R)-hydroxy-(5Z,8Z,12E,14Z)-eicosatetraenoyl]-sn-glycero-3-phosphocholine + H2O = (11R)-hydroxy-(5Z,8Z,12E,14Z)-eicosatetraenoate + sn-glycerol 3-phosphocholine + H(+). It carries out the reaction 1-(5Z,8Z,11Z,14Z-eicosatetraenoyl)-2-O-hexadecyl-sn-glycero-3-phosphocholine + H2O = 2-O-hexadecyl-sn-glycero-3-phosphocholine + (5Z,8Z,11Z,14Z)-eicosatetraenoate + H(+). The catalysed reaction is 1-octadecanoyl-2-(5Z,8Z,11Z,14Z-eicosatetraenoyl)-sn-glycero-3-phosphocholine + glycerol = 1-(5Z,8Z,11Z,14Z-eicosatetraenoyl)-glycerol + 1-octadecanoyl-sn-glycero-3-phosphocholine. It catalyses the reaction 1-octadecanoyl-2-(9Z,12Z,15Z-octadecatrienoyl)-sn-glycero-3-phosphocholine + glycerol = 1-(9Z,12Z,15Z-octadecatrienoyl)-glycerol + 1-octadecanoyl-sn-glycero-3-phosphocholine. It participates in membrane lipid metabolism; glycerophospholipid metabolism. It functions in the pathway lipid metabolism; arachidonate metabolism. Its pathway is lipid metabolism; prostaglandin biosynthesis. The protein operates within lipid metabolism; leukotriene B4 biosynthesis. Its activity is regulated as follows. Activated by cytosolic calcium, which is necessary for binding to membrane lipids. Activated by phosphorylation in response to mitogenic stimuli. Activated by ceramide-1-phosphate. Binding (via C2 domain) to ceramide-1-phosphate increases the affinity for membrane lipids. Can be activated by phosphoinositides in the absence of calcium. Inhibited by ANXA5 in a calcium- and substrate-dependent way. Functionally, has primarily calcium-dependent phospholipase and lysophospholipase activities, with a major role in membrane lipid remodeling and biosynthesis of lipid mediators of the inflammatory response. Plays an important role in embryo implantation and parturition through its ability to trigger prostanoid production. Preferentially hydrolyzes the ester bond of the fatty acyl group attached at sn-2 position of phospholipids (phospholipase A2 activity). Selectively hydrolyzes sn-2 arachidonoyl group from membrane phospholipids, providing the precursor for eicosanoid biosynthesis via the cyclooxygenase pathway. In an alternative pathway of eicosanoid biosynthesis, hydrolyzes sn-2 fatty acyl chain of eicosanoid lysophopholipids to release free bioactive eicosanoids. Hydrolyzes the ester bond of the fatty acyl group attached at sn-1 position of phospholipids (phospholipase A1 activity) only if an ether linkage rather than an ester linkage is present at the sn-2 position. This hydrolysis is not stereospecific. Has calcium-independent phospholipase A2 and lysophospholipase activities in the presence of phosphoinositides. Has O-acyltransferase activity. Catalyzes the transfer of fatty acyl chains from phospholipids to a primary hydroxyl group of glycerol (sn-1 or sn-3), potentially contributing to monoacylglycerol synthesis. The sequence is that of Cytosolic phospholipase A2 (PLA2G4A) from Homo sapiens (Human).